A 644-amino-acid chain; its full sequence is MAKNLILWLVIAVVLMSVFQSFGPSESNGRKVDYSTFLQEVNNDQVREARINGREINVTKKDSNRYTTYIPVQDPKLLDNLLTKNVKVVGEPPEEPSLLASIFISWFPMLLLIGVWIFFMRQMQGGGGKGAMSFGKSKARMLTEDQIKTTFADVAGCDEAKEEVAELVEYLREPSRFQKLGGKIPKGVLMVGPPGTGKTLLAKAIAGEAKVPFFTISGSDFVEMFVGVGASRVRDMFEQAKKAAPCIIFIDEIDAVGRQRGAGLGGGHDEREQTLNQMLVEMDGFEGNEGIIVIAATNRPDVLDPALLRPGRFDRQVVVGLPDVRGREQILKVHMRRVPLAPDIDAAIIARGTPGFSGADLANLVNEAALFAARGNKRVVSMVEFEKAKDKIMMGAERRSMVMTEAQKESTAYHEAGHAIIGRLVPEHDPVHKVTIIPRGRALGVTFFLPEGDAISASRQKLESQISTLYGGRLAEEIIYGPEHVSTGASNDIKVATNLARNMVTQWGFSEKLGPLLYAEEEGEVFLGRSVAKAKHMSDETARIIDQEVKALIERNYNRARQLLTDNMDILHAMKDALMKYETIDAPQIDDLMARRDVRPPAGWEEPGASNNAGDNGSPKAPRPVDEPRTPNPGNTMSEQLGDK.

Topologically, residues 1–4 (MAKN) are cytoplasmic. Residues 5–25 (LILWLVIAVVLMSVFQSFGPS) form a helical membrane-spanning segment. At 26-98 (ESNGRKVDYS…VGEPPEEPSL (73 aa)) the chain is on the periplasmic side. Residues 99 to 119 (LASIFISWFPMLLLIGVWIFF) traverse the membrane as a helical segment. At 120–644 (MRQMQGGGGK…NTMSEQLGDK (525 aa)) the chain is on the cytoplasmic side. ATP is bound at residue 192-199 (GPPGTGKT). Histidine 414 contacts Zn(2+). The active site involves glutamate 415. Zn(2+)-binding residues include histidine 418 and aspartate 492. Positions 598-644 (VRPPAGWEEPGASNNAGDNGSPKAPRPVDEPRTPNPGNTMSEQLGDK) are disordered. Positions 632–644 (NPGNTMSEQLGDK) are enriched in polar residues.

This sequence in the central section; belongs to the AAA ATPase family. In the C-terminal section; belongs to the peptidase M41 family. In terms of assembly, homohexamer. Zn(2+) serves as cofactor.

It localises to the cell inner membrane. Functionally, acts as a processive, ATP-dependent zinc metallopeptidase for both cytoplasmic and membrane proteins. Plays a role in the quality control of integral membrane proteins. In Escherichia coli O157:H7, this protein is ATP-dependent zinc metalloprotease FtsH.